The following is a 500-amino-acid chain: Probable malate:quinone oxidoreductase (500 aa).

This sequence belongs to the MQO family. It depends on FAD as a cofactor.

The enzyme catalyses (S)-malate + a quinone = a quinol + oxaloacetate. It functions in the pathway carbohydrate metabolism; tricarboxylic acid cycle; oxaloacetate from (S)-malate (quinone route): step 1/1. The protein is Probable malate:quinone oxidoreductase of Bacillus anthracis (strain A0248).